Reading from the N-terminus, the 674-residue chain is Polyunsaturated fatty acid 5-lipoxygenase (674 aa).

A PLAT domain is found at 2 to 118 (PSYTVTVATG…EIVLRDGRAK (117 aa)). Ca(2+)-binding residues include glycine 17, threonine 18, aspartate 19, asparagine 44, aspartate 45, glutamate 47, aspartate 79, and aspartate 80. The region spanning 119–674 (LARDDQIHIL…PDRIPNSVAI (556 aa)) is the Lipoxygenase domain. Residue serine 272 is modified to Phosphoserine. Residues histidine 368 and histidine 373 each coordinate Fe cation. Serine 524 is modified (phosphoserine). Fe cation is bound by residues histidine 551, asparagine 555, and isoleucine 674.

Belongs to the lipoxygenase family. As to quaternary structure, homodimer. Interacts with ALOX5AP and LTC4S. Interacts with COTL1, the interaction is required for stability and efficient catalytic activity. Interacts with PIK3R1; this interaction bridges ALOX5 with CD40 after CD40 ligation in B cells and leads to the production of reactive oxygen species (ROS). Interacts (via PLAT domain) with DICER1 (via Dicer dsRNA-binding fold domain); this interaction enhances arachidonate 5-lipoxygenase activity and modifies the miRNA precursor processing activity of DICER1. Requires Fe cation as cofactor. Post-translationally, serine phosphorylation by MAPKAPK2 is stimulated by arachidonic acid. Phosphorylation on Ser-524 by PKA has an inhibitory effect. Phosphorylation on Ser-272 prevents export from the nucleus. Phosphorylation at Ser-524 is stimulated by 8-bromo-3',5'-cyclic AMP or prostaglandin E2. As to expression, expressed in skin Langerhans cells and their emigrated counterparts in draining lymph nodes. Highly expressed in circulating leukocytes.

It is found in the cytoplasm. The protein resides in the nucleus matrix. Its subcellular location is the nucleus membrane. The protein localises to the perinuclear region. It localises to the cytosol. It is found in the nucleus envelope. The protein resides in the nucleus intermembrane space. The enzyme catalyses (5Z,8Z,11Z,14Z)-eicosatetraenoate + O2 = (5S)-hydroperoxy-(6E,8Z,11Z,14Z)-eicosatetraenoate. It catalyses the reaction (5Z,8Z,11Z,14Z)-eicosatetraenoate + O2 = leukotriene A4 + H2O. It carries out the reaction (5Z,8Z,11Z,14Z)-eicosatetraenoate + O2 = (8S)-hydroperoxy-(5Z,9E,11Z,14Z)-eicosatetraenoate. The catalysed reaction is (5Z,8Z,11Z,14Z)-eicosatetraenoate + O2 = (12S)-hydroperoxy-(5Z,8Z,10E,14Z)-eicosatetraenoate. The enzyme catalyses 18-HEPE + O2 = (5S)-hydroperoxy-18-hydroxy-(7E,9E,11Z,14Z,16E)-eicosapentaenoate. It catalyses the reaction (18R)-hydroxy-(5Z,8Z,11Z,14Z,16E)-eicosapentaenoate + O2 = (5S)-hydroperoxy-(18R)-hydroxy-(6E,8Z,11Z,14Z,16E)-eicosapentaenoate. It carries out the reaction (18S)-hydroxy-(5Z,8Z,11Z,14Z,16E)-eicosapentaenoate + O2 = (5S)-hydroperoxy-(18S)-hydroxy-(6E,8Z,11Z,14Z,16E)-eicosapentaenoate. The catalysed reaction is (5S)-hydroperoxy-(18S)-hydroxy-(6E,8Z,11Z,14Z,16E)-eicosapentaenoate = (5S,6S)-epoxy-(18S)-hydroxy-(7E,9E,11Z,14Z,16E)-eicosapentaenoate + H2O. The enzyme catalyses (5S)-hydroperoxy-(18R)-hydroxy-(6E,8Z,11Z,14Z,16E)-eicosapentaenoate = (5S,6S)-epoxy-(18R)-hydroxy-(7E,9E,11Z,14Z,16E)-eicosapentaenoate + H2O. It catalyses the reaction (5S)-hydroperoxy-18-hydroxy-(7E,9E,11Z,14Z,16E)-eicosapentaenoate = (5S,6S)-epoxy-18-hydroxy-(7E,9E,11Z,14Z,16E)-eicosapentaenoate + H2O. It carries out the reaction (15S)-hydroxy-(5Z,8Z,11Z,13E)-eicosatetraenoate + O2 = (5S)-hydroperoxy-(15S)-hydroxy-(6E,8Z,11Z,13E)-eicosatetraenoate. The catalysed reaction is (5S)-hydroperoxy-(6E,8Z,11Z,14Z)-eicosatetraenoate = leukotriene A4 + H2O. The enzyme catalyses (5Z,8Z)-eicosadienoate + O2 = (5S)-hydroperoxy-(6E,8Z)-eicosadienoate. It catalyses the reaction (12S)-hydroxy-(5Z,8Z,10E,14Z)-eicosatetraenoate + O2 = (5S)-hydroperoxy-(12S)-hydroxy-(6E,8Z,10E,14Z)-eicosatetraenoate. It carries out the reaction (5Z,8Z,11Z,14Z,17Z)-eicosapentaenoate + O2 = 5-hydroperoxy-(6E,8Z,11Z,14Z,17Z)-eicosapentaenoate. The catalysed reaction is (4Z,7Z,10Z,13Z,16Z,19Z)-docosahexaenoate + O2 = (14S)-hydroperoxy-(4Z,7Z,10Z,12E,16Z,19Z)-docosahexaenoate. The enzyme catalyses (4Z,7Z,10Z,13Z,16Z,19Z)-docosahexaenoate + O2 = (7S)-hydroperoxy-(4Z,8E,10Z,13Z,16Z,19Z)-docosahexaenoate. It catalyses the reaction (4Z,7Z,10Z,13Z,16Z,19Z)-docosahexaenoate + O2 = (17S)-hydroperoxy-(4Z,7Z,10Z,13Z,15E,19Z)-docosahexaenoate. It participates in lipid metabolism; leukotriene A4 biosynthesis. Catalyzes the oxygenation of arachidonate to 5-hydroperoxyeicosatetraenoate (5-HPETE) followed by the dehydration to 5,6- epoxyeicosatetraenoate (Leukotriene A4/LTA4), the first two steps in the biosynthesis of leukotrienes, which are potent mediators of inflammation. Also catalyzes the oxygenation of arachidonic acid into 8-hydroperoxyicosatetraenoic acid (8-HPETE) and 12-hydroperoxyicosatetraenoic acid (12-HPETE). Displays lipoxin synthase activity being able to convert (15S)-HETE into a conjugate tetraene. Although arachidonate is the preferred substrate, this enzyme can also metabolize oxidized fatty acids derived from arachidonate such as (15S)-HETE, eicosapentaenoate (EPA) such as (18R)- and (18S)-HEPE or docosahexaenoate (DHA) which lead to the formation of specialized pro-resolving mediators (SPM) lipoxin and resolvins E and D respectively, therefore it participates in anti-inflammatory responses. Oxidation of DHA directly inhibits endothelial cell proliferation and sprouting angiogenesis via peroxisome proliferator-activated receptor gamma (PPARgamma). It does not catalyze the oxygenation of linoleic acid and does not convert (5S)-HETE to lipoxin isomers. In addition to inflammatory processes, participates in dendritic cell migration, wound healing through an antioxidant mechanism based on heme oxygenase-1 (HO-1) regulation expression, monocyte adhesion to the endothelium via ITGAM expression on monocytes. Moreover, it helps establish an adaptive humoral immunity by regulating primary resting B cells and follicular helper T cells and participates in the CD40-induced production of reactive oxygen species (ROS) after CD40 ligation in B cells through interaction with PIK3R1 that bridges ALOX5 with CD40. May also play a role in glucose homeostasis, regulation of insulin secretion and palmitic acid-induced insulin resistance via AMPK. Can regulate bone mineralization and fat cell differentiation increases in induced pluripotent stem cells. The sequence is that of Polyunsaturated fatty acid 5-lipoxygenase from Mus musculus (Mouse).